Consider the following 410-residue polypeptide: Arginine biosynthesis bifunctional protein ArgJ (410 aa).

Residues T160, K186, T197, E283, N405, and T410 each contribute to the substrate site. Residue T197 is the Nucleophile of the active site.

Belongs to the ArgJ family. Heterotetramer of two alpha and two beta chains.

The protein localises to the cytoplasm. The enzyme catalyses N(2)-acetyl-L-ornithine + L-glutamate = N-acetyl-L-glutamate + L-ornithine. It catalyses the reaction L-glutamate + acetyl-CoA = N-acetyl-L-glutamate + CoA + H(+). It functions in the pathway amino-acid biosynthesis; L-arginine biosynthesis; L-ornithine and N-acetyl-L-glutamate from L-glutamate and N(2)-acetyl-L-ornithine (cyclic): step 1/1. It participates in amino-acid biosynthesis; L-arginine biosynthesis; N(2)-acetyl-L-ornithine from L-glutamate: step 1/4. In terms of biological role, catalyzes two activities which are involved in the cyclic version of arginine biosynthesis: the synthesis of N-acetylglutamate from glutamate and acetyl-CoA as the acetyl donor, and of ornithine by transacetylation between N(2)-acetylornithine and glutamate. The chain is Arginine biosynthesis bifunctional protein ArgJ from Geobacillus kaustophilus (strain HTA426).